The sequence spans 210 residues: Large ribosomal subunit protein uL4 (210 aa).

Residues 46 to 89 (QGTASTLTRSEVRGGGRKPYKQKGTGRARQGSIRTPLRPGGGII) form a disordered region. Basic residues predominate over residues 60–71 (GGRKPYKQKGTG).

It belongs to the universal ribosomal protein uL4 family. Part of the 50S ribosomal subunit.

In terms of biological role, one of the primary rRNA binding proteins, this protein initially binds near the 5'-end of the 23S rRNA. It is important during the early stages of 50S assembly. It makes multiple contacts with different domains of the 23S rRNA in the assembled 50S subunit and ribosome. Forms part of the polypeptide exit tunnel. The chain is Large ribosomal subunit protein uL4 from Prochlorococcus marinus (strain MIT 9215).